We begin with the raw amino-acid sequence, 310 residues long: MSNPIYNKHIISISDLSRSELELIVSTANDLKQNPRPDLLKNKVVASCFFEASTRTRLSFETAVQRLGGSVIGFPDSGNTSLGKKGETLADSVQVISSYCDAFFMRHNQEGAARLASEFSSAPVINGGDGSNQHPTQTLLDLFSIYETQGTLEKLQVAFVGDLKYGRTVHSLTQALSLFDCEFHFIAPAALSMPDYIIDELKAKGCKYTLHDHLDGVLPNLDILYMTRVQKERFDETEYQHLKSSFILNANMLEGVKENLKVLHPLPRIDEITTDVDSTPYAYYFQQAKNGVYARQALLALVLTNEFGDK.

Positions 55 and 56 each coordinate carbamoyl phosphate. Lys85 is an L-aspartate binding site. Positions 106, 134, and 137 each coordinate carbamoyl phosphate. The L-aspartate site is built by Arg167 and Arg228. Leu266 and Pro267 together coordinate carbamoyl phosphate.

Belongs to the aspartate/ornithine carbamoyltransferase superfamily. ATCase family. Heterododecamer (2C3:3R2) of six catalytic PyrB chains organized as two trimers (C3), and six regulatory PyrI chains organized as three dimers (R2).

It carries out the reaction carbamoyl phosphate + L-aspartate = N-carbamoyl-L-aspartate + phosphate + H(+). Its pathway is pyrimidine metabolism; UMP biosynthesis via de novo pathway; (S)-dihydroorotate from bicarbonate: step 2/3. In terms of biological role, catalyzes the condensation of carbamoyl phosphate and aspartate to form carbamoyl aspartate and inorganic phosphate, the committed step in the de novo pyrimidine nucleotide biosynthesis pathway. The sequence is that of Aspartate carbamoyltransferase catalytic subunit 3 from Shewanella halifaxensis (strain HAW-EB4).